Reading from the N-terminus, the 165-residue chain is MENSYEETIDKRRVHLRPDTLRDPAPASLHLLPCEVPVNRPTPVGRFFTPAIRMGRDGLEASFRGRSLRGEEVVVPPGFVGYVVTEEKAEVLMGKQDDHERQEQELLEPPEALERDCDRFMGATASFSSFTVWGLESIPGPDAKLRGALSWPSLAAAIHAQVPED.

N-acetylmethionine is present on methionine 1.

It belongs to the RNase H2 subunit C family. The RNase H2 complex is a heterotrimer composed of the catalytic subunit RNASEH2A and the non-catalytic subunits RNASEH2B and RNASEH2C.

The protein resides in the nucleus. In terms of biological role, non catalytic subunit of RNase H2, an endonuclease that specifically degrades the RNA of RNA:DNA hybrids. Participates in DNA replication, possibly by mediating the removal of lagging-strand Okazaki fragment RNA primers during DNA replication. Mediates the excision of single ribonucleotides from DNA:RNA duplexes. The polypeptide is Ribonuclease H2 subunit C (RNASEH2C) (Bos taurus (Bovine)).